We begin with the raw amino-acid sequence, 359 residues long: Histamine H2 receptor (359 aa).

Residues 1 to 22 (MAFNGTVPSFCMDFTVYKVTIS) are Extracellular-facing. A glycan (N-linked (GlcNAc...) asparagine) is linked at Asn4. Residues 23–44 (VILIILILVTVAGNVVVCLAVG) form a helical membrane-spanning segment. At 45-57 (LNRRLRSLTNCFI) the chain is on the cytoplasmic side. The helical transmembrane segment at 58–81 (VSLAVTDLLLGLLVLPFSAIYQLS) threads the bilayer. Residues 82-92 (CKWSFSKVFCN) lie on the Extracellular side of the membrane. Cys91 and Cys174 are joined by a disulfide. A helical transmembrane segment spans residues 93 to 114 (IYTSLDVMLCTASILNLFMISL). Over 115–134 (DRYCAVTDPLRYPVLITPAR) the chain is Cytoplasmic. Residues 135–159 (VAISLVFIWVISITLSFLSIHLGWN) traverse the membrane as a helical segment. The Extracellular segment spans residues 160 to 180 (SRNETSKDNDTIVKCKVQVNE). Residues 181 to 204 (VYGLVDGLVTFYLPLLIMCITYFR) traverse the membrane as a helical segment. Residues 205 to 234 (IFKIAREQARRINHIGSWKAATIREHKATV) lie on the Cytoplasmic side of the membrane. A helical membrane pass occupies residues 235–258 (TLAAVMGAFIICWFPYFTVFVYRG). The Extracellular portion of the chain corresponds to 259 to 267 (LKGDDAVNE). A helical membrane pass occupies residues 268 to 289 (VFEDVVLWLGYANSALNPILYA). The Cytoplasmic segment spans residues 290-359 (ALNRDFRTAY…VTAPQGATNR (70 aa)). A lipid anchor (S-palmitoyl cysteine) is attached at Cys305.

This sequence belongs to the G-protein coupled receptor 1 family.

The protein localises to the cell membrane. The H2 subclass of histamine receptors mediates gastric acid secretion. The activity of this receptor is mediated by G proteins which activate adenylyl cyclase. The polypeptide is Histamine H2 receptor (HRH2) (Cavia porcellus (Guinea pig)).